Here is a 188-residue protein sequence, read N- to C-terminus: Large ribosomal subunit protein eL18 (188 aa).

Lys-119 participates in a covalent cross-link: Glycyl lysine isopeptide (Lys-Gly) (interchain with G-Cter in SUMO2). A Phosphoserine modification is found at Ser-130. The segment at 150-188 (RHFGKAPGTPHSHTKPYVRSKGRKFERARGRRASRGYKN) is disordered. Position 158 is a phosphothreonine (Thr-158). Composition is skewed to basic residues over residues 161 to 171 (SHTKPYVRSKG) and 178 to 188 (RGRRASRGYKN). A Glycyl lysine isopeptide (Lys-Gly) (interchain with G-Cter in SUMO2) cross-link involves residue Lys-164.

This sequence belongs to the eukaryotic ribosomal protein eL18 family. Component of the large ribosomal subunit.

It is found in the cytoplasm. Its subcellular location is the cytosol. The protein localises to the rough endoplasmic reticulum. In terms of biological role, component of the large ribosomal subunit. The ribosome is a large ribonucleoprotein complex responsible for the synthesis of proteins in the cell. This chain is Large ribosomal subunit protein eL18 (Rpl18), found in Mus musculus (Mouse).